We begin with the raw amino-acid sequence, 360 residues long: Peptide chain release factor 1 (360 aa).

Position 235 is an N5-methylglutamine (glutamine 235). Positions 284–313 (AKRQQAEASTRRNLLGSGDRSDRNRTYNFP) are disordered.

Belongs to the prokaryotic/mitochondrial release factor family. In terms of processing, methylated by PrmC. Methylation increases the termination efficiency of RF1.

It localises to the cytoplasm. Peptide chain release factor 1 directs the termination of translation in response to the peptide chain termination codons UAG and UAA. The sequence is that of Peptide chain release factor 1 from Salmonella schwarzengrund (strain CVM19633).